We begin with the raw amino-acid sequence, 191 residues long: Glycerol-3-phosphate acyltransferase (191 aa).

5 helical membrane-spanning segments follow: residues 5–25 (IVFV…ITKI), 50–70 (CIAA…VYIA), 78–98 (SFHM…PVWL), 112–132 (ILIA…LAVF), and 153–173 (SFFF…LIFF).

The protein belongs to the PlsY family. As to quaternary structure, probably interacts with PlsX.

Its subcellular location is the cell membrane. It carries out the reaction an acyl phosphate + sn-glycerol 3-phosphate = a 1-acyl-sn-glycero-3-phosphate + phosphate. It functions in the pathway lipid metabolism; phospholipid metabolism. Catalyzes the transfer of an acyl group from acyl-phosphate (acyl-PO(4)) to glycerol-3-phosphate (G3P) to form lysophosphatidic acid (LPA). This enzyme utilizes acyl-phosphate as fatty acyl donor, but not acyl-CoA or acyl-ACP. The chain is Glycerol-3-phosphate acyltransferase from Wolbachia sp. subsp. Brugia malayi (strain TRS).